Consider the following 244-residue polypeptide: Nuclear protein UL4 homolog (244 aa).

Residues 193-227 form a disordered region; sequence RPDDQTTPTPTPHQYTSQRRQPETNCPSSPQPAFF. The segment covering 205-220 has biased composition (polar residues); sequence HQYTSQRRQPETNCPS.

Belongs to the alphaherpesvirinae HHV-1 UL4 family.

The protein resides in the host nucleus. The polypeptide is Nuclear protein UL4 homolog (Varicella-zoster virus (strain Dumas) (HHV-3)).